A 313-amino-acid chain; its full sequence is E3 ubiquitin-protein ligase siah2 (313 aa).

The disordered stretch occupies residues 1-49; the sequence is MSRPSSAGPCASKPCGKQKQPPPPPPHAPSLPATISGGPGASAPPAPTA. Positions 20–29 are enriched in pro residues; the sequence is QPPPPPPHAP. Residues 69–104 form an RING-type zinc finger; that stretch reads CPVCFDYVLPPILQCQAGHLVCNQCRQKLSCCPTCR. Positions 119–311 are SBD; the sequence is VASAVLFPCK…LGINVTISTC (193 aa). The SIAH-type zinc-finger motif lies at 122–182; the sequence is AVLFPCKYAS…VMQHLTHSHK (61 aa). The Zn(2+) site is built by C127, C134, H146, C150, C157, C164, H176, and H181.

The protein belongs to the SINA (Seven in absentia) family. As to quaternary structure, homodimer. As to expression, widely expressed in early embryos until stage 40. It is then expressed in brain, spinal cord and in the developing and mature eye.

The protein localises to the cytoplasm. It catalyses the reaction S-ubiquitinyl-[E2 ubiquitin-conjugating enzyme]-L-cysteine + [acceptor protein]-L-lysine = [E2 ubiquitin-conjugating enzyme]-L-cysteine + N(6)-ubiquitinyl-[acceptor protein]-L-lysine.. It functions in the pathway protein modification; protein ubiquitination. In terms of biological role, E3 ubiquitin-protein ligase that mediates ubiquitination and subsequent proteasomal degradation of target proteins. E3 ubiquitin ligases accept ubiquitin from an E2 ubiquitin-conjugating enzyme in the form of a thioester and then directly transfers the ubiquitin to targeted substrates. Involved in eye morphogenesis, probably triggers the ubiquitin-mediated degradation of different substrates. May play a role in the regulation of the cellular clock function. The protein is E3 ubiquitin-protein ligase siah2 (siah2) of Xenopus laevis (African clawed frog).